A 347-amino-acid chain; its full sequence is Protein FAM50 homolog (347 aa).

Basic and acidic residues predominate over residues 77 to 113 (EDIVREREKKLAQKKEEKDREKLKALEAKQAEKDRQR). Residues 77–142 (EDIVREREKK…EDEEEPLEIK (66 aa)) form a disordered region. The segment covering 123 to 138 (PEEDEESFDDEDEEEP) has biased composition (acidic residues).

It belongs to the FAM50 family.

The sequence is that of Protein FAM50 homolog from Aedes aegypti (Yellowfever mosquito).